The chain runs to 267 residues: 4-hydroxy-tetrahydrodipicolinate reductase (267 aa).

10–15 contacts NAD(+); it reads GANGRM. Residue R37 coordinates NADP(+). NAD(+) contacts are provided by residues 98–100 and 122–125; these read GTT and ARNY. The active-site Proton donor/acceptor is H155. A (S)-2,3,4,5-tetrahydrodipicolinate-binding site is contributed by H156. K159 acts as the Proton donor in catalysis. 165-166 provides a ligand contact to (S)-2,3,4,5-tetrahydrodipicolinate; that stretch reads GT.

This sequence belongs to the DapB family.

Its subcellular location is the cytoplasm. It catalyses the reaction (S)-2,3,4,5-tetrahydrodipicolinate + NAD(+) + H2O = (2S,4S)-4-hydroxy-2,3,4,5-tetrahydrodipicolinate + NADH + H(+). The catalysed reaction is (S)-2,3,4,5-tetrahydrodipicolinate + NADP(+) + H2O = (2S,4S)-4-hydroxy-2,3,4,5-tetrahydrodipicolinate + NADPH + H(+). Its pathway is amino-acid biosynthesis; L-lysine biosynthesis via DAP pathway; (S)-tetrahydrodipicolinate from L-aspartate: step 4/4. Catalyzes the conversion of 4-hydroxy-tetrahydrodipicolinate (HTPA) to tetrahydrodipicolinate. This chain is 4-hydroxy-tetrahydrodipicolinate reductase, found in Pseudoalteromonas translucida (strain TAC 125).